A 220-amino-acid polypeptide reads, in one-letter code: Guanylate kinase (220 aa).

The region spanning 16–195 is the Guanylate kinase-like domain; that stretch reads GLMFVLSSPS…AFESVKAILR (180 aa). Residue 23-30 coordinates ATP; that stretch reads SPSGAGKT.

The protein belongs to the guanylate kinase family.

Its subcellular location is the cytoplasm. The enzyme catalyses GMP + ATP = GDP + ADP. Functionally, essential for recycling GMP and indirectly, cGMP. This chain is Guanylate kinase, found in Rhodopseudomonas palustris (strain HaA2).